Reading from the N-terminus, the 1164-residue chain is Phospholipid-transporting ATPase IA (1164 aa).

Over 1–75 (MPTMRRTVSE…PRFLYSQFRR (75 aa)) the chain is Cytoplasmic. Ser-25 carries the phosphoserine modification. Thr-28 is subject to Phosphothreonine. Ser-29 carries the post-translational modification Phosphoserine. A helical transmembrane segment spans residues 76 to 96 (AANSFFLFIALLQQIPDVSPT). Residues 97–100 (GRYT) are Exoplasmic loop-facing. The chain crosses the membrane as a helical span at residues 101–121 (TLVPLLFILAVAAIKEIIEDI). Residues 122 to 297 (KRHKADNAVN…SNVERITNVQ (176 aa)) lie on the Cytoplasmic side of the membrane. A helical transmembrane segment spans residues 298 to 318 (ILILFCILIAMSLVCSVGSAI). Residues 319–339 (WNRRHSGKDWYLHLHYGGASN) lie on the Exoplasmic loop side of the membrane. Residues 340-360 (FGLNFLTFIILFNNLIPISLL) traverse the membrane as a helical segment. At 361-866 (VTLEVVKFTQ…KCILYCFYKN (506 aa)) the chain is on the cytoplasmic side. The active-site 4-aspartylphosphate intermediate is Asp-409. Positions 409, 410, and 411 each coordinate ATP. Residue Asp-409 participates in Mg(2+) binding. Thr-411 lines the Mg(2+) pocket. Ser-443 is subject to Phosphoserine. Residues Glu-508, Phe-549, Lys-572, Arg-605, Thr-685, Gly-686, Asp-687, 741–748 (ALIIDGKT), Arg-775, and Lys-781 each bind ATP. Asp-801 contacts Mg(2+). ATP contacts are provided by Asn-804 and Asp-805. Asp-805 provides a ligand contact to Mg(2+). The helical transmembrane segment at 867–887 (IVLYIIEIWFAFVNGFSGQIL) threads the bilayer. Residues 888–890 (FER) lie on the Exoplasmic loop side of the membrane. A helical transmembrane segment spans residues 891–911 (WCIGLYNVMFTAMPPLTLGIF). The Cytoplasmic portion of the chain corresponds to 912–939 (ERSCRKENMLKYPELYKTSQNALDFNTK). Residues 940–960 (VFWVHCLNGLFHSVILFWFPL) form a helical membrane-spanning segment. At 961-977 (KALQYGTVFGNGKTSDY) the chain is on the exoplasmic loop side. The helical transmembrane segment at 978 to 998 (LLLGNFVYTFVVITVCLKAGL) threads the bilayer. Residues 999–1008 (ETSYWTWFSH) lie on the Cytoplasmic side of the membrane. Residues 1009–1029 (IAIWGSIALWVVFFGIYSSLW) form a helical membrane-spanning segment. Residues 1030-1044 (PAVPMAPDMSGEAAM) lie on the Exoplasmic loop side of the membrane. The chain crosses the membrane as a helical span at residues 1045–1065 (LFSSGVFWVGLLSIPVASLLL). At 1066–1164 (DVLYKVIKRT…DTTKQRPDEW (99 aa)) the chain is on the cytoplasmic side. Residue 1095-1102 (GAVVLGKS) coordinates ATP. Position 1126 is a phosphoserine (Ser-1126).

Belongs to the cation transport ATPase (P-type) (TC 3.A.3) family. Type IV subfamily. In terms of assembly, component of a P4-ATPase flippase complex which consists of a catalytic alpha subunit and an accessory beta subunit. Interacts with TMEM30A to form a flippase complex; this complex forms an intermediate phosphoenzyme. Interacts with TMEM30B; this interaction is reported conflictingly. Mg(2+) serves as cofactor. In terms of processing, cleaved by calpain in a caspase- and calcium influx-dependent manner only during platelet apoptosis and may lead to inactivation. As to expression, found in most tissues except liver and testis. Most abundant in brain and lung. Also detected in fetal tissues. Isoform 1 is expressed in brain. Isoform 2 and isoform 3 are expressed in reticulocytes. Expressed in mouse hippocampus in both dentate gyrus (DG) and the CA3 regions. Expressed in both neuronal as well as non-neuronal cells within the DG. Highly expressed in platelets.

The protein resides in the cytoplasmic vesicle. Its subcellular location is the secretory vesicle. It is found in the chromaffin granule membrane. It localises to the cytoplasmic granule. The protein localises to the cell membrane. The protein resides in the endoplasmic reticulum. Its subcellular location is the golgi apparatus. It is found in the endomembrane system. The catalysed reaction is ATP + H2O + phospholipidSide 1 = ADP + phosphate + phospholipidSide 2.. It catalyses the reaction a 1,2-diacyl-sn-glycero-3-phospho-L-serine(out) + ATP + H2O = a 1,2-diacyl-sn-glycero-3-phospho-L-serine(in) + ADP + phosphate + H(+). With respect to regulation, ATPase activity is stimulated by phosphatidylserine (PS) and minimally by phosphatidylethanolamine (PE). ATPase activity is inhibited by the vanadate and by the presence of calcium. Catalytic component of a P4-ATPase flippase complex which catalyzes the hydrolysis of ATP coupled to the transport of aminophospholipids from the outer to the inner leaflet of various membranes and ensures the maintenance of asymmetric distribution of phospholipids. Phospholipid translocation also seems to be implicated in vesicle formation and in uptake of lipid signaling molecules. In vitro, its ATPase activity is selectively and stereospecifically stimulated by phosphatidylserine (PS). The flippase complex ATP8A1:TMEM30A seems to play a role in regulation of cell migration probably involving flippase-mediated translocation of phosphatidylethanolamine (PE) at the cell membrane. Acts as aminophospholipid translocase at the cell membrane in neuronal cells; the activity is associated with hippocampus-dependent learning. May play a role in brain connectivity. The chain is Phospholipid-transporting ATPase IA from Mus musculus (Mouse).